Reading from the N-terminus, the 223-residue chain is PKHD-type hydroxylase syc1482_d (223 aa).

One can recognise a Fe2OG dioxygenase domain in the interval 78 to 176 (RVHSLLFSRY…RFACVGWVQS (99 aa)). Residues H96, D98, and H157 each contribute to the Fe cation site. Residue R167 coordinates 2-oxoglutarate.

It depends on Fe(2+) as a cofactor. L-ascorbate serves as cofactor.

The chain is PKHD-type hydroxylase syc1482_d from Synechococcus sp. (strain ATCC 27144 / PCC 6301 / SAUG 1402/1) (Anacystis nidulans).